The sequence spans 494 residues: ETS translocation variant 4 (494 aa).

Disordered stretches follow at residues 82–113 (ENSV…SHKQ) and 139–201 (AGGS…SGSA). Residues 100–113 (SPGSDPSQSCSHKQ) are compositionally biased toward polar residues. The span at 176–187 (SSSQSHACHSHS) shows a compositional bias: low complexity. Polar residues predominate over residues 188–197 (YPMNPSSRFP). The segment at residues 350-430 (LQLWQFLVAL…AGERYVYKFV (81 aa)) is a DNA-binding region (ETS).

The protein belongs to the ETS family. Post-translationally, phosphorylated. As to expression, in the embryo, expressed ubiquitously until the late blastula stage, in the marginal zone of gastrula stages, in the presumptive forebrain and hindbrain and in the trunk region of early somite stages. In later stages, also expressed in Rohon-Beard neurons, epiphysis, lateral line placodes, pectoral fin buds, developing lens and heart.

It is found in the nucleus. Functionally, transcriptional activator that binds to the (5'-CCGGA[AT]-3') motif. May control the acquisition of specific cell fates at an early stage during development of the somites and nervous system. May mediate the cellular effects of the fibroblast growth factors on embryogenesis. In Danio rerio (Zebrafish), this protein is ETS translocation variant 4 (etv4).